A 213-amino-acid chain; its full sequence is Amelogenin, X isoform (213 aa).

The signal sequence occupies residues 1–16 (MGTWILFACLLGAAFS). Ser32 bears the Phosphoserine mark. Low complexity-rich tracts occupy residues 96-105 (VPQQPMMPVP) and 114-160 (QHHQ…QPLQ). The interval 96 to 213 (VPQQPMMPVP…TDKTKREEVD (118 aa)) is disordered. The segment covering 161–194 (PLQPQPPVHPIQPLPPQPPLPPIFPMQPLPPMLP) has biased composition (pro residues).

It belongs to the amelogenin family. Interacts with KRT5. Post-translationally, phosphorylated by FAM20C in vitro.

It is found in the secreted. The protein resides in the extracellular space. It localises to the extracellular matrix. In terms of biological role, plays a role in the biomineralization of teeth. Seems to regulate the formation of crystallites during the secretory stage of tooth enamel development. Thought to play a major role in the structural organization and mineralization of developing enamel. The protein is Amelogenin, X isoform (AMELX) of Bos taurus (Bovine).